Reading from the N-terminus, the 373-residue chain is MAADLEPWNSTINGTWEGDELGYKCRFNEDFKYVLLPVSYGVVCVLGLCLNVVALYIFLCRLKTWNASTTYMFHLAVSDSLYAASLPLLVYYYARGDHWPFSTVLCKLVRFLFYTNLYCSILFLTCISVHRCLGVLRPLHSLRWGRARYARRVAAVVWVLVLACQAPVLYFVTTSVRGTRITCHDTSARELFSHFVAYSSVMLGLLFAVPFSVILVCYVLMARRLLKPAYGTTGGLPRAKRKSVRTIALVLAVFALCFLPFHVTRTLYYSFRSLDLSCHTLNAINMAYKITRPLASANSCLDPVLYFLAGQRLVRFARDAKPPTEPTPSPQARRKLGLHRPNRTVRKDLSVSSDDSRRTESTPAGSETKDIRL.

Topologically, residues M1–K32 are extracellular. Residues N9 and N13 are each glycosylated (N-linked (GlcNAc...) asparagine). Residues Y33–L59 traverse the membrane as a helical segment. Residues C60–T70 lie on the Cytoplasmic side of the membrane. A helical membrane pass occupies residues Y71–Y93. Residues A94–R110 lie on the Extracellular side of the membrane. The cysteines at positions 106 and 183 are disulfide-linked. Residues F111–V129 traverse the membrane as a helical segment. The Cytoplasmic portion of the chain corresponds to H130–R152. The helical transmembrane segment at V153–V172 threads the bilayer. The Extracellular portion of the chain corresponds to T173–H194. A helical membrane pass occupies residues F195 to L220. Topologically, residues M221–T246 are cytoplasmic. Residues I247–Y269 form a helical membrane-spanning segment. Residues S270–A287 are Extracellular-facing. The chain crosses the membrane as a helical span at residues Y288 to A309. The Cytoplasmic portion of the chain corresponds to G310–L373. Residues R318–L373 are disordered. Residues A332 to T344 are compositionally biased toward basic residues. Residues V345 to E360 show a composition bias toward basic and acidic residues.

Belongs to the G-protein coupled receptor 1 family. Spleen, testis, kidney, liver, lung, heart and brain.

It is found in the cell membrane. Receptor for ATP and UTP coupled to G-proteins that activate a phosphatidylinositol-calcium second messenger system. The affinity range is UTP = ATP &gt; ATP-gamma-S &gt;&gt; 2-methylthio-ATP = ADP. This Mus musculus (Mouse) protein is P2Y purinoceptor 2 (P2ry2).